The following is a 277-amino-acid chain: Small ribosomal subunit protein uS3 (277 aa).

Positions 38-106 (IRRLLATGLE…QVQLNILEVK (69 aa)) constitute a KH type-2 domain. Residues 217–277 (AGVEAGRGAP…SAPSAETTES (61 aa)) are disordered. Positions 225–235 (APDRPRRERPA) are enriched in basic and acidic residues. A compositionally biased stretch (low complexity) spans 242 to 261 (SGSSGTTATSTEAGRAAAET).

It belongs to the universal ribosomal protein uS3 family. As to quaternary structure, part of the 30S ribosomal subunit. Forms a tight complex with proteins S10 and S14.

Its function is as follows. Binds the lower part of the 30S subunit head. Binds mRNA in the 70S ribosome, positioning it for translation. The sequence is that of Small ribosomal subunit protein uS3 from Mycobacteroides abscessus (strain ATCC 19977 / DSM 44196 / CCUG 20993 / CIP 104536 / JCM 13569 / NCTC 13031 / TMC 1543 / L948) (Mycobacterium abscessus).